Reading from the N-terminus, the 2235-residue chain is Bridge-like lipid transfer protein family member 2 (2235 aa).

A signal peptide spans 1–31 (MPLFFSALLVLLLVALSALFLGRWLVVRLAT). Residues 29-108 (LATKWCQRKL…LQKVSDLSAP (80 aa)) are transmembrane domain. Position 563 is a phosphoserine (Ser563). The N-linked (GlcNAc...) asparagine glycan is linked to Asn730. The tract at residues 1495–1529 (PQMPAKKPKRGVPTSASAPPRVNTPSFSGQPDKGS) is disordered. Residues 1813 to 1885 (SILHLQEAVR…LNILIRCFKD (73 aa)) are a coiled coil. 3 positions are modified to phosphoserine: Ser1846, Ser2090, and Ser2094. Residues 2074–2099 (GKGVAQGLTRSSGVRRSFRKSPEHPV) form a disordered region.

This sequence belongs to the SABRE family. Expressed in pancreas, placenta and up-regulated in breast carcinoma epithelial cells, ductal in situ carcinoma (DCIS), invasive breast carcinoma (IBC) and metastatic breast carcinoma cells (MET).

It localises to the cell membrane. The protein resides in the endoplasmic reticulum membrane. The protein localises to the mitochondrion membrane. Tube-forming lipid transport protein which binds to phosphatidylinositols and affects phosphatidylinositol-4,5-bisphosphate (PtdIns-4,5-P2) distribution. This Homo sapiens (Human) protein is Bridge-like lipid transfer protein family member 2.